We begin with the raw amino-acid sequence, 226 residues long: Pyridoxal 5'-phosphate synthase subunit PdxT (226 aa).

An L-glutamine-binding site is contributed by Gly-60–Ser-62. Cys-92 functions as the Nucleophile in the catalytic mechanism. L-glutamine-binding positions include Arg-121 and Ile-150 to Arg-151. Catalysis depends on charge relay system residues His-191 and Glu-193.

This sequence belongs to the glutaminase PdxT/SNO family. In terms of assembly, in the presence of PdxS, forms a dodecamer of heterodimers. Only shows activity in the heterodimer.

The enzyme catalyses aldehydo-D-ribose 5-phosphate + D-glyceraldehyde 3-phosphate + L-glutamine = pyridoxal 5'-phosphate + L-glutamate + phosphate + 3 H2O + H(+). The catalysed reaction is L-glutamine + H2O = L-glutamate + NH4(+). The protein operates within cofactor biosynthesis; pyridoxal 5'-phosphate biosynthesis. Functionally, catalyzes the hydrolysis of glutamine to glutamate and ammonia as part of the biosynthesis of pyridoxal 5'-phosphate. The resulting ammonia molecule is channeled to the active site of PdxS. The polypeptide is Pyridoxal 5'-phosphate synthase subunit PdxT (Nocardia farcinica (strain IFM 10152)).